A 151-amino-acid polypeptide reads, in one-letter code: Large ribosomal subunit protein uL13 (151 aa).

It belongs to the universal ribosomal protein uL13 family. In terms of assembly, part of the 50S ribosomal subunit.

In terms of biological role, this protein is one of the early assembly proteins of the 50S ribosomal subunit, although it is not seen to bind rRNA by itself. It is important during the early stages of 50S assembly. In Acaryochloris marina (strain MBIC 11017), this protein is Large ribosomal subunit protein uL13.